A 725-amino-acid chain; its full sequence is MTDFVKCQRLKVAVKLQRFVDEEVLPGTGLEPEAFWKGFDALVHDLAPVNRELLAERERLQGQLDKWHKAHPGPITDMPAYRAFLHSIGYLQPVPEHVAATTANVDLEISEQAGPQLVVPASNARYALNAANARWGSLYDALYGTDVISTSNGAEIRAGYNPLRGAKVIAFARELLDTSAPLANGSHSDANRYRIEDGELRITLADGSQTLLQHPEKYVGFTGEPDQPQAILLKNHGLHIEIQFDPQHPVGKTDAAGIKDLLLESALSTIVDCEDSVAAVDADDKVLVYRNWLGLMKGDLTETLDKGGKAITRSLNPDRVYHAAAGGELTLRGRSLLLIRNVGHLMSNPAIVDQDDKEIPEGILDGVITSLIGLHDLTRHGNSRAGSIYIVKPKMHGAAEVAFADQLFSRIEDVLHLPRNTLKMGIMDEERRTSVNLKACINAASARVAFINTGFLDRTGDEIHSAMQAGPVLRKGEMKNTPWIKAYERNNVQVGLACGLRGRAQIGKGMWAMPDRMADMLEQKIAHPKSGATTAWVPSPTAATLHAWHYHHVDVRQVQEQLEQQSLVDVSDQWLDDLLTIPVVGKPEWTREQILEELENNTQGLLGYVVRWVEQGIGCSKVPDIHNVGLMEDRATLRISSQHMANWLLHDIAGKEDIQNVLERMAKVVDKQNAGDSHYRPMTRDFKNSAAFKAACALVFKGTEQPSGYTEPLLHESRLAFKDAH.

Acetyl-CoA is bound by residues Val-118, 125-126 (RY), Ser-276, and Arg-313. Residue Arg-340 is the Proton acceptor of the active site. Residues Arg-340, Glu-429, and 454–457 (GFLD) contribute to the glyoxylate site. Mg(2+) is bound by residues Glu-429 and Asp-457. Pro-538 provides a ligand contact to acetyl-CoA. Cysteine sulfenic acid (-SOH) is present on Cys-619. Catalysis depends on Asp-633, which acts as the Proton donor.

The protein belongs to the malate synthase family. GlcB subfamily. Monomer. Mg(2+) serves as cofactor.

The protein localises to the cytoplasm. It carries out the reaction glyoxylate + acetyl-CoA + H2O = (S)-malate + CoA + H(+). It functions in the pathway carbohydrate metabolism; glyoxylate cycle; (S)-malate from isocitrate: step 2/2. Functionally, involved in the glycolate utilization. Catalyzes the condensation and subsequent hydrolysis of acetyl-coenzyme A (acetyl-CoA) and glyoxylate to form malate and CoA. The chain is Malate synthase G 2 from Pseudomonas syringae pv. tomato (strain ATCC BAA-871 / DC3000).